A 428-amino-acid polypeptide reads, in one-letter code: A-kinase anchor protein 5 (428 aa).

Residues 1–170 (MEITVSEIQV…VTKTQTQSDD (170 aa)) are essential to the intracellular anchoring function. Disordered regions lie at residues 1-207 (MEIT…SPGE) and 237-313 (LEEK…TELS). Positions 10-32 (VESKDETRSAEVRPQDERQEEKA) are enriched in basic and acidic residues. Cys-36 carries S-palmitoyl cysteine lipidation. Over residues 37–48 (FKRRKKAAKAMK) the composition is skewed to basic residues. Residues 57 to 68 (DAAKKCPPEARA) show a composition bias toward basic and acidic residues. The short motif at 76–96 (GGAWDSIKRLVTRRKRSESSK) is the AKAP CaM-binding element. Thr-87 carries the phosphothreonine; by PKC modification. The residue at position 92 (Ser-92) is a Phosphoserine; by PKA. Position 94 is a phosphoserine; by PKC (Ser-94). The S-palmitoyl cysteine moiety is linked to residue Cys-129. Residues 133-156 (SKGEKRSNHSKIIEDSDRSVKVQE) are compositionally biased toward basic and acidic residues. Residues 161-170 (VTKTQTQSDD) are compositionally biased toward polar residues. Composition is skewed to basic and acidic residues over residues 171–191 (QATK…KGDD) and 290–311 (PDWK…KDTE). Positions 389–410 (YETLLIETASSLVKNAIQLSIE) are RII-beta subunit binding domain. Residues 411–428 (QLVNEMASDDNTINNRLQ) form a tethers NFATC2 to CRAC channels region.

Binding protein for dimer of the RII-beta regulatory subunit of cAMP-dependent protein kinase (PKA) and also for the protein kinase C (PKC) and the phosphatase calcineurin (PP2B). Each enzyme is inhibited when bound to the anchoring protein. Also binds the beta2-adrenergic receptor. Part of a complex containing AKAP5, ADCY5, ADCY6 and PDE4C. Interacts with ADCY8, and enhances its phosphorylation at lipid rafts. Interacts with ORAI1 (isoform alpha) (via N-terminus) upon store depletion and in response to LTC4. Does not interact with ORAI2 and ORAI3 paralogs. Interacts (via leucine zipper domain) with NFATC2/NFAT1. Interacts with calmodulin; the interaction is calcium-independent. Interacts with KCNQ2; the interaction may help KCNQ2 channel complex to retain calcium-bound calmodulin. In terms of processing, palmitoylated. Palmitoylation at Cys-36 and Cys-129 play a key role in the targeting of AKAP5 to lipid rafts. Palmitoylation by ZDHHC2 is required for AKAP5 function in LTP-stimulated recycling endosome exocytosis. In terms of tissue distribution, predominantly in brain, and to a lesser extent in adrenal medulla, lung and anterior pituitary.

It is found in the postsynaptic recycling endosome membrane. Multivalent scaffold protein that anchors the cAMP-dependent protein kinase/PKA to cytoskeletal and/or organelle-associated proteins, targeting the signal carried by cAMP to specific intracellular effectors. Association with the beta2-adrenergic receptor (beta2-AR) not only regulates beta2-AR signaling pathway, but also the activation by PKA by switching off the beta2-AR signaling cascade. Plays a role in long term synaptic potentiation by regulating protein trafficking from the dendritic recycling endosomes to the plasma membrane and controlling both structural and functional plasticity at excitatory synapses. Associates with ORAI1 pore-forming subunit of CRAC channels in Ca(2+) signaling microdomains where it recruits NFATC2/NFAT1 and couples store-operated Ca(2+) influx to calmodulin and calcineurin signaling and activation of NFAT-dependent transcriptional responses. In Bos taurus (Bovine), this protein is A-kinase anchor protein 5 (AKAP5).